The sequence spans 577 residues: Arginine--tRNA ligase (577 aa).

The short motif at 132 to 142 (ANPTGPLHVGH) is the 'HIGH' region element.

This sequence belongs to the class-I aminoacyl-tRNA synthetase family. Monomer.

The protein localises to the cytoplasm. The enzyme catalyses tRNA(Arg) + L-arginine + ATP = L-arginyl-tRNA(Arg) + AMP + diphosphate. This is Arginine--tRNA ligase from Pelagibacter ubique (strain HTCC1062).